The following is an 89-amino-acid chain: Large ribosomal subunit protein bL31B (89 aa).

Belongs to the bacterial ribosomal protein bL31 family. Type B subfamily. As to quaternary structure, part of the 50S ribosomal subunit.

The sequence is that of Large ribosomal subunit protein bL31B from Pseudomonas fluorescens (strain ATCC BAA-477 / NRRL B-23932 / Pf-5).